Consider the following 287-residue polypeptide: Putative holocytochrome-c1 synthase (287 aa).

The span at 1–12 (MRGFGSDSSQAS) shows a compositional bias: polar residues. 2 disordered regions span residues 1–63 (MRGF…QPSS) and 81–100 (QSQS…SAPL). Composition is skewed to low complexity over residues 31 to 63 (QARA…QPSS) and 81 to 92 (QSQSANSTQQAQ).

Belongs to the cytochrome c-type heme lyase family.

It is found in the mitochondrion inner membrane. It catalyses the reaction holo-[cytochrome c] = apo-[cytochrome c] + heme b. In terms of biological role, probable lyase that catalyzes the covalent linking of the heme group to the cytochrome C apoprotein to produce the mature functional cytochrome. The chain is Putative holocytochrome-c1 synthase from Chaetomium thermophilum (strain DSM 1495 / CBS 144.50 / IMI 039719) (Thermochaetoides thermophila).